The sequence spans 316 residues: Methionyl-tRNA formyltransferase (316 aa).

112 to 115 is a binding site for (6S)-5,6,7,8-tetrahydrofolate; sequence SLLP.

The protein belongs to the Fmt family.

It catalyses the reaction L-methionyl-tRNA(fMet) + (6R)-10-formyltetrahydrofolate = N-formyl-L-methionyl-tRNA(fMet) + (6S)-5,6,7,8-tetrahydrofolate + H(+). Attaches a formyl group to the free amino group of methionyl-tRNA(fMet). The formyl group appears to play a dual role in the initiator identity of N-formylmethionyl-tRNA by promoting its recognition by IF2 and preventing the misappropriation of this tRNA by the elongation apparatus. The protein is Methionyl-tRNA formyltransferase of Glaesserella parasuis serovar 5 (strain SH0165) (Haemophilus parasuis).